Here is a 347-residue protein sequence, read N- to C-terminus: Phenylalanine--tRNA ligase alpha subunit (347 aa).

Glu262 is a Mg(2+) binding site.

Belongs to the class-II aminoacyl-tRNA synthetase family. Phe-tRNA synthetase alpha subunit type 1 subfamily. In terms of assembly, tetramer of two alpha and two beta subunits. Mg(2+) is required as a cofactor.

It localises to the cytoplasm. The catalysed reaction is tRNA(Phe) + L-phenylalanine + ATP = L-phenylalanyl-tRNA(Phe) + AMP + diphosphate + H(+). In Roseiflexus castenholzii (strain DSM 13941 / HLO8), this protein is Phenylalanine--tRNA ligase alpha subunit.